Reading from the N-terminus, the 364-residue chain is Fructose-bisphosphate aldolase A (364 aa).

Position 5 is a phosphotyrosine (Tyr5). Thr9 carries the post-translational modification Phosphothreonine. Residues Ser36 and Ser39 each carry the phosphoserine modification. Lys42 is subject to N6-acetyllysine; alternate. Lys42 participates in a covalent cross-link: Glycyl lysine isopeptide (Lys-Gly) (interchain with G-Cter in SUMO1); alternate. Residue Lys42 forms a Glycyl lysine isopeptide (Lys-Gly) (interchain with G-Cter in SUMO2); alternate linkage. Position 43 (Arg43) interacts with beta-D-fructose 1,6-bisphosphate. Position 46 is a phosphoserine (Ser46). Lys99 is subject to N6-(2-hydroxyisobutyryl)lysine. Lys108 is subject to N6-acetyllysine. Lys111 is subject to N6-acetyllysine; alternate. At Lys111 the chain carries N6-malonyllysine; alternate. Phosphoserine is present on Ser132. An N6-(2-hydroxyisobutyryl)lysine modification is found at Lys147. Residue Glu188 is the Proton acceptor of the active site. Lys230 serves as the catalytic Schiff-base intermediate with dihydroxyacetone-P. Ser272 is modified (phosphoserine). Residues 272-274 (SGG), Ser301, and Arg304 each bind beta-D-fructose 1,6-bisphosphate. Lys312 bears the N6-malonyllysine mark. Lys330 carries the post-translational modification N6-acetyllysine.

This sequence belongs to the class I fructose-bisphosphate aldolase family. In terms of assembly, homotetramer. Interacts with SNX9 and WAS. Interacts with FBP2; the interaction blocks FBP2 inhibition by physiological concentrations of AMP and reduces inhibition by Ca(2+).

The protein resides in the cytoplasm. The protein localises to the myofibril. It is found in the sarcomere. Its subcellular location is the i band. It localises to the m line. It carries out the reaction beta-D-fructose 1,6-bisphosphate = D-glyceraldehyde 3-phosphate + dihydroxyacetone phosphate. Its pathway is carbohydrate degradation; glycolysis; D-glyceraldehyde 3-phosphate and glycerone phosphate from D-glucose: step 4/4. Functionally, catalyzes the reversible conversion of beta-D-fructose 1,6-bisphosphate (FBP) into two triose phosphate and plays a key role in glycolysis and gluconeogenesis. In addition, may also function as scaffolding protein. The sequence is that of Fructose-bisphosphate aldolase A (Aldoa) from Mus musculus (Mouse).